The sequence spans 69 residues: Probable cold shock protein y4cH (69 aa).

Positions 5-65 (GTVKWFNATK…DRKSGKMSAD (61 aa)) constitute a CSD domain.

The protein resides in the cytoplasm. The protein is Probable cold shock protein y4cH of Sinorhizobium fredii (strain NBRC 101917 / NGR234).